A 135-amino-acid chain; its full sequence is Phosphoinositide-interacting protein (135 aa).

Residues 1 to 21 (MEVLPKALEVDERSPESKDLL) are disordered. The span at 8-19 (LEVDERSPESKD) shows a compositional bias: basic and acidic residues. The next 2 membrane-spanning stretches (helical) occupy residues 54–74 (IIIM…TCVA) and 92–112 (PAFL…VPII).

In terms of assembly, interacts with TRPV1. In terms of tissue distribution, strongly expressed in most dorsal root ganglia (DRG) and trigeminal neurons. Expressed by most peptidergic (CGRP+) and non-peptidergic (IB4+) DRG neurons. Weakly expressed in other parts of the peripheral nervous system (PNS) including sympathetic and enteric neurons. Not expressed in the spinal cord.

The protein resides in the membrane. Functionally, regulatory subunit of TRPV1, a molecular sensor of noxious heat and capsaicin. Positively regulates TRPV1 channel activity via phosphatidylinositol 4,5-bisphosphate (PIP2). Binds various phosphoinositide, including phosphatidylinositol 4,5-bisphosphate (PIP2), but not phosphatidylinositol (PI). The polypeptide is Phosphoinositide-interacting protein (Pirt) (Mus musculus (Mouse)).